The primary structure comprises 731 residues: Inclusion body clearance protein IML2 (731 aa).

The disordered stretch occupies residues Met-1 to Gln-26. A compositionally biased stretch (polar residues) spans Ser-10–Gln-26. A phosphoserine mark is found at Ser-265, Ser-268, and Ser-378. Thr-380 is modified (phosphothreonine). Residues Ser-383 and Ser-392 each carry the phosphoserine modification.

The protein belongs to the IML2 family. As to quaternary structure, interacts with lipid droplet proteins PET10 and PDR16.

It is found in the cytoplasm. The protein resides in the nucleus. Inclusion body (IB) resident protein that interacts strongly with lipid droplet (LD) proteins. Involved in LD-mediated IB clearing after protein folding stress, probably by enabling access to the IBs of an LD-stored soluble sterol derivative that acts as a chaperone in inclusion clearing. The protein is Inclusion body clearance protein IML2 (IML2) of Saccharomyces cerevisiae (strain YJM789) (Baker's yeast).